Reading from the N-terminus, the 361-residue chain is tRNA-specific 2-thiouridylase MnmA (361 aa).

ATP-binding positions include G11–S18 and M37. The Nucleophile role is filled by C106. A disulfide bridge links C106 with C202. G130 contacts ATP. Positions K152–Q154 are interaction with tRNA. The Cysteine persulfide intermediate role is filled by C202. The interaction with tRNA stretch occupies residues R308–Y309.

The protein belongs to the MnmA/TRMU family.

It localises to the cytoplasm. It carries out the reaction S-sulfanyl-L-cysteinyl-[protein] + uridine(34) in tRNA + AH2 + ATP = 2-thiouridine(34) in tRNA + L-cysteinyl-[protein] + A + AMP + diphosphate + H(+). Catalyzes the 2-thiolation of uridine at the wobble position (U34) of tRNA, leading to the formation of s(2)U34. This Clostridium botulinum (strain Eklund 17B / Type B) protein is tRNA-specific 2-thiouridylase MnmA.